Consider the following 630-residue polypeptide: PAN2-PAN3 deadenylation complex subunit PAN3 (630 aa).

A C3H1-type zinc finger spans residues 7-36 (SAKDTLCKNILIYGYCKFENKGCAFSHHKP). Disordered stretches follow at residues 38 to 72 (VGQP…PSFQ) and 135 to 171 (GFGS…QSSG). The segment covering 44-56 (SASSSSGYSGNSS) has biased composition (low complexity). The segment covering 140-149 (YPSSPNTSGA) has biased composition (polar residues). A pseudokinase domain region spans residues 231–501 (QTLPRSNLPE…LDRFSQRYLT (271 aa)). Residues Arg283, 333–340 (DYFPNSST), and 388–389 (TK) contribute to the ATP site. The stretch at 502-540 (TRLFSTINNLEDSTDFMESQITTELENARLFRLLTKLNF) forms a coiled coil. Residues 541-630 (IIDRPEAKDW…DSVFRNLTRD (90 aa)) are knob domain.

Belongs to the protein kinase superfamily. PAN3 family. In terms of assembly, homodimer. Forms a heterotrimer with a catalytic subunit PAN2 to form the poly(A)-nuclease (PAN) deadenylation complex. Interacts (via PAM-2 motif) with poly(A)-binding protein PAB1 (via PABC domain), conferring substrate specificity of the enzyme complex.

The protein resides in the cytoplasm. Regulatory subunit of the poly(A)-nuclease (PAN) deadenylation complex, one of two cytoplasmic mRNA deadenylases involved in mRNA turnover. PAN specifically shortens poly(A) tails of RNA and the activity is stimulated by poly(A)-binding protein PAB1. PAN deadenylation is followed by rapid degradation of the shortened mRNA tails by the CCR4-NOT complex. Deadenylated mRNAs are then degraded by two alternative mechanisms, namely exosome-mediated 3'-5' exonucleolytic degradation, or deadenylation-dependent mRNA decaping and subsequent 5'-3' exonucleolytic degradation by XRN1. May also be involved in post-transcriptional maturation of mRNA poly(A) tails. PAN3 acts as a positive regulator for PAN activity, recruiting the catalytic subunit PAN2 to mRNA via its interaction with RNA and with PAB1. The protein is PAN2-PAN3 deadenylation complex subunit PAN3 of Scheffersomyces stipitis (strain ATCC 58785 / CBS 6054 / NBRC 10063 / NRRL Y-11545) (Yeast).